A 718-amino-acid chain; its full sequence is Manganese-exporting P-type ATPase (718 aa).

An HMA domain is found at 11–78 (GRMRVKVDWV…AIKGAAHVAA (68 aa)). The next 6 membrane-spanning stretches (helical) occupy residues 87–105 (HSAE…GGVA), 128–146 (TVAT…RGAL), 154–168 (AGTD…VASL), 177–191 (LTVL…YLQD), 327–351 (VGEN…LITG), and 357–375 (MTML…TPTA). The active-site 4-aspartylphosphate intermediate is Asp408. 3 residues coordinate Mg(2+): Asp408, Thr410, and Asp610. 2 helical membrane-spanning segments follow: residues 661-680 (AVDV…AAGL) and 690-709 (PVLA…ANSS).

Belongs to the cation transport ATPase (P-type) (TC 3.A.3) family. Type IB subfamily.

The protein resides in the cell membrane. It catalyses the reaction Mn(2+)(in) + ATP + H2O = Mn(2+)(out) + ADP + phosphate + H(+). In terms of biological role, high affinity, slow turnover Mn(2+) transporting ATPase. The polypeptide is Manganese-exporting P-type ATPase (ctpC) (Mycobacterium bovis (strain ATCC BAA-935 / AF2122/97)).